The primary structure comprises 404 residues: MIWKEILIRYGELSTKGRNKMDFIRRLRENIRHAFADLGHLHIRTERDRMFIAIENDAQMQTLVTGLPKIFGIQSFSPVAACEKDMESMKQLAITIMETFKDQPYTFKVEVKRTDKTFPLESHAIQREIGGYVLPQFNNLSVKVKQPDIELRVEVRHDATYMMAQVIPGAGGMPVGSNGKSLLMLSGGIDSPVAGYLMMKRGVRLEAIHFFSPPYTSQNSLEKVKVLANELTKFGANIRLHVIPFTEIQVLIKEKVPSNVSMTTTRRMMLKVADQVREEIGALAIVTGESLGQVASQTLESLTAINAVTNTPILRPLISSDKLEIIELAEQIGTYETSIQPFEDCCTIFTPASPKTKPKLEKVEHYESFSDFDELIARAVKNREVYIFPKKEEEQQQDKFADLL.

Residues 61 to 166 enclose the THUMP domain; that stretch reads QTLVTGLPKI…HDATYMMAQV (106 aa). Residues 184–185, 209–210, R266, G288, and Q297 contribute to the ATP site; these read ML and HF.

The protein belongs to the ThiI family.

The protein localises to the cytoplasm. It carries out the reaction [ThiI sulfur-carrier protein]-S-sulfanyl-L-cysteine + a uridine in tRNA + 2 reduced [2Fe-2S]-[ferredoxin] + ATP + H(+) = [ThiI sulfur-carrier protein]-L-cysteine + a 4-thiouridine in tRNA + 2 oxidized [2Fe-2S]-[ferredoxin] + AMP + diphosphate. It catalyses the reaction [ThiS sulfur-carrier protein]-C-terminal Gly-Gly-AMP + S-sulfanyl-L-cysteinyl-[cysteine desulfurase] + AH2 = [ThiS sulfur-carrier protein]-C-terminal-Gly-aminoethanethioate + L-cysteinyl-[cysteine desulfurase] + A + AMP + 2 H(+). Its pathway is cofactor biosynthesis; thiamine diphosphate biosynthesis. In terms of biological role, catalyzes the ATP-dependent transfer of a sulfur to tRNA to produce 4-thiouridine in position 8 of tRNAs, which functions as a near-UV photosensor. Also catalyzes the transfer of sulfur to the sulfur carrier protein ThiS, forming ThiS-thiocarboxylate. This is a step in the synthesis of thiazole, in the thiamine biosynthesis pathway. The sulfur is donated as persulfide by IscS. The polypeptide is Probable tRNA sulfurtransferase (Lysinibacillus sphaericus (strain C3-41)).